A 154-amino-acid polypeptide reads, in one-letter code: 6,7-dimethyl-8-ribityllumazine synthase (154 aa).

5-amino-6-(D-ribitylamino)uracil-binding positions include phenylalanine 22, 56 to 58, and 80 to 82; these read AFE and AVI. 85–86 is a (2S)-2-hydroxy-3-oxobutyl phosphate binding site; that stretch reads AT. Histidine 88 (proton donor) is an active-site residue. 5-amino-6-(D-ribitylamino)uracil is bound at residue phenylalanine 113. Arginine 127 lines the (2S)-2-hydroxy-3-oxobutyl phosphate pocket.

The protein belongs to the DMRL synthase family.

The enzyme catalyses (2S)-2-hydroxy-3-oxobutyl phosphate + 5-amino-6-(D-ribitylamino)uracil = 6,7-dimethyl-8-(1-D-ribityl)lumazine + phosphate + 2 H2O + H(+). It functions in the pathway cofactor biosynthesis; riboflavin biosynthesis; riboflavin from 2-hydroxy-3-oxobutyl phosphate and 5-amino-6-(D-ribitylamino)uracil: step 1/2. Its function is as follows. Catalyzes the formation of 6,7-dimethyl-8-ribityllumazine by condensation of 5-amino-6-(D-ribitylamino)uracil with 3,4-dihydroxy-2-butanone 4-phosphate. This is the penultimate step in the biosynthesis of riboflavin. The protein is 6,7-dimethyl-8-ribityllumazine synthase of Clostridium botulinum (strain ATCC 19397 / Type A).